Reading from the N-terminus, the 381-residue chain is Estradiol 17-beta-dehydrogenase 2 (381 aa).

A helical; Signal-anchor for type II membrane protein transmembrane segment spans residues 4–24 (FSSESAWLCLTATAVLGGMLL). 83–112 (QKAVLVTGADSGFGHALAKHLDKLGFTVFA) serves as a coordination point for NAD(+). Serine 220 lines the substrate pocket. The active-site Proton acceptor is the tyrosine 233.

Belongs to the short-chain dehydrogenases/reductases (SDR) family. Homodimer. As to expression, highly expressed in the placenta, and in the small intestine, and liver.

It is found in the endoplasmic reticulum membrane. The enzyme catalyses 17beta-estradiol + NAD(+) = estrone + NADH + H(+). The catalysed reaction is testosterone + NAD(+) = androst-4-ene-3,17-dione + NADH + H(+). It carries out the reaction 17beta-hydroxy-5alpha-androstan-3-one + NAD(+) = 5alpha-androstan-3,17-dione + NADH + H(+). It catalyses the reaction (20S)-hydroxypregn-4-en-3-one + NAD(+) = progesterone + NADH + H(+). Catalyzes the NAD-dependent oxidation of highly active 17beta-hydroxysteroids, such as estradiol (E2), testosterone (T), and dihydrotestosterone (DHT), to their less active forms and thus regulates the biological potency of these steroids. Oxidizes estradiol to estrone, testosterone to androstenedione, and dihydrotestosterone to 5alpha-androstan-3,17-dione. Also has 20-alpha-HSD activity. This Rattus norvegicus (Rat) protein is Estradiol 17-beta-dehydrogenase 2 (Hsd17b2).